Reading from the N-terminus, the 164-residue chain is Small ribosomal subunit protein uS9 (164 aa).

Belongs to the universal ribosomal protein uS9 family.

In Rickettsia bellii (strain OSU 85-389), this protein is Small ribosomal subunit protein uS9.